The following is a 398-amino-acid chain: Isochorismate synthase DhbC (398 aa).

Serine 271 bears the Phosphoserine mark.

Belongs to the isochorismate synthase family.

The enzyme catalyses chorismate = isochorismate. It functions in the pathway siderophore biosynthesis; bacillibactin biosynthesis. This is Isochorismate synthase DhbC (dhbC) from Bacillus subtilis (strain 168).